The following is a 382-amino-acid chain: Chaperone protein DnaJ (382 aa).

Positions 5-70 (DYYEVLGVSR…DKKAAYDRYG (66 aa)) constitute a J domain. A CR-type zinc finger spans residues 141–219 (GVQKTINVPA…CHGAGRVEKE (79 aa)). The Zn(2+) site is built by cysteine 154, cysteine 157, cysteine 171, cysteine 174, cysteine 193, cysteine 196, cysteine 207, and cysteine 210. CXXCXGXG motif repeat units lie at residues 154 to 161 (CDSCKGTG), 171 to 178 (CPTCSGMG), 193 to 200 (CPTCNGMG), and 207 to 214 (CKSCHGAG).

Belongs to the DnaJ family. In terms of assembly, homodimer. The cofactor is Zn(2+).

It is found in the cytoplasm. Functionally, participates actively in the response to hyperosmotic and heat shock by preventing the aggregation of stress-denatured proteins and by disaggregating proteins, also in an autonomous, DnaK-independent fashion. Unfolded proteins bind initially to DnaJ; upon interaction with the DnaJ-bound protein, DnaK hydrolyzes its bound ATP, resulting in the formation of a stable complex. GrpE releases ADP from DnaK; ATP binding to DnaK triggers the release of the substrate protein, thus completing the reaction cycle. Several rounds of ATP-dependent interactions between DnaJ, DnaK and GrpE are required for fully efficient folding. Also involved, together with DnaK and GrpE, in the DNA replication of plasmids through activation of initiation proteins. The protein is Chaperone protein DnaJ of Cereibacter sphaeroides (strain ATCC 17025 / ATH 2.4.3) (Rhodobacter sphaeroides).